Here is a 164-residue protein sequence, read N- to C-terminus: Large ribosomal subunit protein bL21 (164 aa).

The tract at residues 105-164 (KAPTIGPRAKKEKKVEAAPADGEAPAKKAPAKKAAAKKAAPKAAAKKAPAKKAAPKAKSE) is disordered. Over residues 133–164 (APAKKAAAKKAAPKAAAKKAPAKKAAPKAKSE) the composition is skewed to basic residues.

Belongs to the bacterial ribosomal protein bL21 family. Part of the 50S ribosomal subunit. Contacts protein L20.

In terms of biological role, this protein binds to 23S rRNA in the presence of protein L20. This chain is Large ribosomal subunit protein bL21, found in Afipia carboxidovorans (strain ATCC 49405 / DSM 1227 / KCTC 32145 / OM5) (Oligotropha carboxidovorans).